We begin with the raw amino-acid sequence, 436 residues long: GTPase Der (436 aa).

EngA-type G domains follow at residues proline 4–glutamate 167 and valine 176–serine 351. GTP-binding positions include glycine 10–serine 17, aspartate 57–isoleucine 61, asparagine 119–aspartate 122, glycine 182–serine 189, aspartate 229–methionine 233, and asparagine 294–aspartate 297. One can recognise a KH-like domain in the interval leucine 352–lysine 436.

The protein belongs to the TRAFAC class TrmE-Era-EngA-EngB-Septin-like GTPase superfamily. EngA (Der) GTPase family. As to quaternary structure, associates with the 50S ribosomal subunit.

Functionally, GTPase that plays an essential role in the late steps of ribosome biogenesis. The protein is GTPase Der of Listeria monocytogenes serotype 4b (strain F2365).